The chain runs to 689 residues: Glycine--tRNA ligase beta subunit (689 aa).

Belongs to the class-II aminoacyl-tRNA synthetase family. Tetramer of two alpha and two beta subunits.

Its subcellular location is the cytoplasm. It catalyses the reaction tRNA(Gly) + glycine + ATP = glycyl-tRNA(Gly) + AMP + diphosphate. The chain is Glycine--tRNA ligase beta subunit from Actinobacillus pleuropneumoniae serotype 5b (strain L20).